Here is a 379-residue protein sequence, read N- to C-terminus: NADH-rubredoxin oxidoreductase (379 aa).

2 cysteine pairs are disulfide-bonded: Cys-26–Cys-286 and Cys-137–Cys-216. FAD is bound by residues 33–35, Arg-42, Ala-79, and Tyr-125; that span reads NSE. Asp-259 contributes to the FAD binding site.

Belongs to the FAD-dependent oxidoreductase family. Monomer. The cofactor is FAD.

The catalysed reaction is 2 reduced [rubredoxin] + NAD(+) + H(+) = 2 oxidized [rubredoxin] + NADH. Its function is as follows. Catalyzes the NADH-dependent reduction of rubredoxin (Rd). NADPH is a very poor electron donor compared to NADH. Functions as an intermediate component in the electron transfer chain: NADH-&gt;NROR-&gt;Rd-&gt;FprA1/2. Also functions as an intermediate component in the electron transfer chains from NADH to revRbr and Dfx. Therefore, is a key electron carrier in an efficient multienzyme complex that can scavenge O(2) and reactive oxygen species (ROS), and thus plays an important role in the oxidative stress defense system in C.acetobutylicum, an obligate anaerobic bacterium. The chain is NADH-rubredoxin oxidoreductase (nroR) from Clostridium acetobutylicum (strain ATCC 824 / DSM 792 / JCM 1419 / IAM 19013 / LMG 5710 / NBRC 13948 / NRRL B-527 / VKM B-1787 / 2291 / W).